Here is a 484-residue protein sequence, read N- to C-terminus: Cobyric acid synthase (484 aa).

Residues Val-248 to Ser-435 enclose the GATase cobBQ-type domain. Cys-329 (nucleophile) is an active-site residue. His-427 is a catalytic residue.

It belongs to the CobB/CobQ family. CobQ subfamily.

The protein operates within cofactor biosynthesis; adenosylcobalamin biosynthesis. In terms of biological role, catalyzes amidations at positions B, D, E, and G on adenosylcobyrinic A,C-diamide. NH(2) groups are provided by glutamine, and one molecule of ATP is hydrogenolyzed for each amidation. The protein is Cobyric acid synthase of Pseudomonas putida (strain W619).